A 116-amino-acid polypeptide reads, in one-letter code: Acyl-CoA-binding protein homolog 3 (116 aa).

The 90-residue stretch at 3–92 folds into the ACB domain; that stretch reads LQEKFDAAVE…LNDMFDKIAE (90 aa). Residues 34–38, Lys60, and Tyr79 each bind an acyl-CoA; that span reads YSLFK.

The protein belongs to the ACBP family.

Its function is as follows. Binds medium- and long-chain acyl-CoA esters with very high affinity and may function as an intracellular carrier of acyl-CoA esters. This Caenorhabditis elegans protein is Acyl-CoA-binding protein homolog 3 (acbp-3).